Here is a 312-residue protein sequence, read N- to C-terminus: Ribosomal RNA small subunit methyltransferase H (312 aa).

S-adenosyl-L-methionine contacts are provided by residues 38–40 (GGH), Asp-58, Phe-84, Asp-104, and Gln-111.

The protein belongs to the methyltransferase superfamily. RsmH family.

It localises to the cytoplasm. The catalysed reaction is cytidine(1402) in 16S rRNA + S-adenosyl-L-methionine = N(4)-methylcytidine(1402) in 16S rRNA + S-adenosyl-L-homocysteine + H(+). Specifically methylates the N4 position of cytidine in position 1402 (C1402) of 16S rRNA. This chain is Ribosomal RNA small subunit methyltransferase H, found in Alcanivorax borkumensis (strain ATCC 700651 / DSM 11573 / NCIMB 13689 / SK2).